We begin with the raw amino-acid sequence, 527 residues long: Bifunctional purine biosynthesis protein PurH (527 aa).

The 149-residue stretch at 1–149 folds into the MGS-like domain; that stretch reads MASDFLPVRR…KNFARVAVAA (149 aa).

It belongs to the PurH family.

The catalysed reaction is (6R)-10-formyltetrahydrofolate + 5-amino-1-(5-phospho-beta-D-ribosyl)imidazole-4-carboxamide = 5-formamido-1-(5-phospho-D-ribosyl)imidazole-4-carboxamide + (6S)-5,6,7,8-tetrahydrofolate. The enzyme catalyses IMP + H2O = 5-formamido-1-(5-phospho-D-ribosyl)imidazole-4-carboxamide. It functions in the pathway purine metabolism; IMP biosynthesis via de novo pathway; 5-formamido-1-(5-phospho-D-ribosyl)imidazole-4-carboxamide from 5-amino-1-(5-phospho-D-ribosyl)imidazole-4-carboxamide (10-formyl THF route): step 1/1. It participates in purine metabolism; IMP biosynthesis via de novo pathway; IMP from 5-formamido-1-(5-phospho-D-ribosyl)imidazole-4-carboxamide: step 1/1. This is Bifunctional purine biosynthesis protein PurH from Xanthomonas axonopodis pv. citri (strain 306).